The chain runs to 516 residues: Rho guanine nucleotide exchange factor 9 (516 aa).

One can recognise an SH3 domain in the interval 8–67; sequence DSIVSAEAVWDHVTMANRELAFKAGDVIKVLDASNKDWWWGQIDDEEGWFPASFVRLWVN. Residues 100-110 form an interaction with GPHN region; it reads RDQMRANVINE. A DH domain is found at 103–287; that stretch reads MRANVINEIM…RNVTQQINER (185 aa). The PH domain maps to 318-425; the sequence is ELIYTGEMAW…WLRAFREERK (108 aa). The tract at residues 453–480 is disordered; that stretch reads PKQKGVNSARSVPPSYPPPQDPLNHGQY. The residue at position 502 (Ser502) is a Phosphoserine.

In terms of assembly, interacts with GPHN. Detected in brain. Detected at low levels in heart.

It is found in the cytoplasm. It localises to the postsynaptic density. Functionally, acts as a guanine nucleotide exchange factor (GEF) for CDC42. Promotes formation of GPHN clusters. This Homo sapiens (Human) protein is Rho guanine nucleotide exchange factor 9 (ARHGEF9).